Consider the following 399-residue polypeptide: Elongation factor Tu (399 aa).

The 195-residue stretch at 10-204 (KPHVNIGTIG…AVDASIPEPE (195 aa)) folds into the tr-type G domain. The G1 stretch occupies residues 19–26 (GHVDHGKT). 19–26 (GHVDHGKT) contributes to the GTP binding site. Thr-26 provides a ligand contact to Mg(2+). Positions 60 to 64 (GITIN) are G2. Residues 81 to 84 (DCPG) are G3. Residues 81-85 (DCPGH) and 136-139 (NKCD) contribute to the GTP site. The G4 stretch occupies residues 136–139 (NKCD). The interval 174–176 (SGL) is G5.

The protein belongs to the TRAFAC class translation factor GTPase superfamily. Classic translation factor GTPase family. EF-Tu/EF-1A subfamily. Monomer.

The protein resides in the cytoplasm. It carries out the reaction GTP + H2O = GDP + phosphate + H(+). GTP hydrolase that promotes the GTP-dependent binding of aminoacyl-tRNA to the A-site of ribosomes during protein biosynthesis. The protein is Elongation factor Tu of Synechococcus sp. (strain CC9902).